The following is a 78-amino-acid chain: Sec-independent protein translocase protein TatA (78 aa).

A helical membrane pass occupies residues 4 to 21; sequence SFQHILILLVVVLLLFGR. The segment at 49–78 is disordered; it reads TAKSDSIKTIDNTGKPTNVQANPQRQDSTV. The segment covering 57–78 has biased composition (polar residues); the sequence is TIDNTGKPTNVQANPQRQDSTV.

The protein belongs to the TatA/E family. In terms of assembly, the Tat system comprises two distinct complexes: a TatABC complex, containing multiple copies of TatA, TatB and TatC subunits, and a separate TatA complex, containing only TatA subunits. Substrates initially bind to the TatABC complex, which probably triggers association of the separate TatA complex to form the active translocon.

The protein resides in the cell inner membrane. Functionally, part of the twin-arginine translocation (Tat) system that transports large folded proteins containing a characteristic twin-arginine motif in their signal peptide across membranes. TatA could form the protein-conducting channel of the Tat system. This Afipia carboxidovorans (strain ATCC 49405 / DSM 1227 / KCTC 32145 / OM5) (Oligotropha carboxidovorans) protein is Sec-independent protein translocase protein TatA.